Here is a 260-residue protein sequence, read N- to C-terminus: MTRNENVEENLSVRVRDLNLWYGDHQALKDISIDIFANTVTALIGPSGCGKSTFLRCLNRMNDLINSVSIKGLVEMDGHDVNARGMDEVALRRRVGMVFQKPNPFPKSIYENVAYAPRMHDMVSRKADQDELVERALRDAGLWNEVKDKLHEPGTSLSGGQQQRLCIARAIAVRPDVILMDEPTSALDPISTATIEDLMDKLKKDFTIVTVTHNMQQAARVADYTAFFHLGEMIEYNATKQMFSNPHTKKAEDYITGRYG.

In terms of domain architecture, ABC transporter spans 13–255; that stretch reads VRVRDLNLWY…PHTKKAEDYI (243 aa). 45 to 52 contributes to the ATP binding site; the sequence is GPSGCGKS.

It belongs to the ABC transporter superfamily. Phosphate importer (TC 3.A.1.7) family. The complex is composed of two ATP-binding proteins (PstB), two transmembrane proteins (PstC and PstA) and a solute-binding protein (PstS).

The protein resides in the cell inner membrane. It catalyses the reaction phosphate(out) + ATP + H2O = ADP + 2 phosphate(in) + H(+). Its function is as follows. Part of the ABC transporter complex PstSACB involved in phosphate import. Responsible for energy coupling to the transport system. The protein is Phosphate import ATP-binding protein PstB 1 of Chromohalobacter salexigens (strain ATCC BAA-138 / DSM 3043 / CIP 106854 / NCIMB 13768 / 1H11).